A 7570-amino-acid polypeptide reads, in one-letter code: Dystonin (7570 aa).

2 Calponin-homology (CH) domains span residues 35-138 (KVQK…LHFQ) and 151-255 (MSAK…DAFP). The tract at residues 35 to 252 (KVQKKTFTKW…VITYVSSLYD (218 aa)) is actin-binding. Phosphoserine is present on residues Leu-135, Lys-184, Ser-236, and Ser-237. 2 Spectrin repeats span residues 602–699 (EINM…RHLD) and 701–802 (LHNF…QHIK). In terms of domain architecture, SH3 spans 887–944 (KTSIPIKAICDYRQIEITIYKDDECVLANNSHRAKWKVISPTGNEAMVPSVCFTVPPP). 2 Spectrin repeats span residues 1293-1422 (KYYR…KFAG) and 1440-1540 (KEHV…QESQ). A Phosphoserine modification is found at Ser-1382. A Nuclear localization signal; in isoform 6 motif is present at residues 1383–1389 (PVKRRRM). Glu-1565 carries the phosphoserine modification. Plectin repeat units lie at residues 1584–1626 (IRLL…QLKE), 1660–1703 (KVLE…LERQ), 1774–1817 (RLLS…LTYQ), 1818–1855 (VQTG…LEAQ), and 1856–1891 (RGYV…KILN). The residue at position 2229 (Ser-2229) is a Phosphoserine. Disordered regions lie at residues 2317–2346 (SNTS…IEEY), 2383–2441 (LLND…DETA), and 2585–2616 (DYIY…GKPR). Residues 2336–2345 (DKEDESEIEE) are compositionally biased toward acidic residues. Low complexity predominate over residues 2385-2394 (NDQQNNTGTD). Composition is skewed to acidic residues over residues 2395–2412 (TDSD…DDDH), 2430–2439 (YDTLQEENDE), and 2591–2605 (NDQD…DEEG). Ser-2919 is subject to Phosphoserine. Residues 3190–3221 (EASTVPSDSQMSDSSGVSPMTNSSELKPESRD) are disordered. Residues 3192–3209 (STVPSDSQMSDSSGVSPM) are compositionally biased toward low complexity. 28 Spectrin repeats span residues 3395 to 3501 (LQHT…KQIM), 3643 to 3752 (QEYK…KELD), 3926 to 4040 (EKFD…NNLK), 4047 to 4153 (QHYE…EKLQ), 4160 to 4259 (LSVQ…ETLA), 4269 to 4368 (ELFE…EAVT), 4516 to 4621 (QKAQ…QKLE), 4628 to 4732 (TQFQ…DWID), 4742 to 4842 (QSLL…QHLQ), 4849 to 4951 (HQFQ…NKLK), 4958 to 5058 (LKYK…FCLE), 5068 to 5167 (QEVS…SFLE), 5174 to 5277 (GHFQ…EQVE), 5284 to 5388 (EEFY…AQLQ), 5395 to 5497 (GRFQ…RQLE), 5504 to 5715 (QQFH…KTLE), 5831 to 5933 (QQFD…LQLE), 5941 to 6041 (QFWE…VALD), 6048 to 6154 (TQFH…AKLL), 6161 to 6263 (EKFW…DKLE), 6270 to 6373 (VQYQ…HKLE), 6380 to 6482 (GQFQ…QQLD), 6489 to 6591 (KGFH…TKLE), 6598 to 6700 (MEFH…RSLD), 6707 to 6810 (KQFH…NKLE), 6817 to 6918 (GQFT…TRLE), 6925 to 7027 (EEFH…QRLA), and 7037 to 7167 (QELL…RKLN). Position 3968 is a phosphoserine (Ser-3968). The residue at position 4749 (Ser-4749) is a Phosphoserine. Residue Lys-5470 forms a Glycyl lysine isopeptide (Lys-Gly) (interchain with G-Cter in ubiquitin) linkage. EF-hand domains lie at 7197–7232 (HKKS…SKFP) and 7233–7268 (TSRL…NKDA). The Ca(2+) site is built by Asp-7210, Asp-7212, Asp-7214, Lys-7216, Glu-7221, Asp-7246, Asp-7248, Asp-7250, Tyr-7252, and Glu-7257. Residues 7273 to 7351 (TDADKIEDEV…EFLVKNDPCR (79 aa)) enclose the GAR domain. Disordered regions lie at residues 7358–7379 (KMLR…AKGR), 7395–7452 (SQGM…SKLR), and 7481–7570 (QFAD…SSKR). A compositionally biased stretch (polar residues) spans 7362–7374 (SESNSSITTTQPT). Composition is skewed to low complexity over residues 7411-7441 (SSRG…TTTP) and 7490-7504 (SRPG…GSRA). Residue Ser-7432 is modified to Phosphoserine. A phosphoserine mark is found at Ser-7510, Ser-7513, and Ser-7525. Residues 7519–7535 (EIQSVCSDVETVPQTHR) are compositionally biased toward polar residues. The short motif at 7550–7553 (SKIP) is the Microtubule tip localization signal element.

In terms of assembly, homodimer. Isoform 1 interacts (via N-terminus) with PLEC (via N-terminus). Interacts with the neuronal intermediate filament protein, PRPH. Interacts with DES. Interacts with SYNE3. Isoform 1 and isoform 6 can homodimerize (via N-terminus). Isoform 1 interacts (via N-terminus) with ACTN2. Isoform 1 interacts (via N-terminus) with PLEC (via N-terminus). Isoform 3 interacts (via N-terminus) with COL17A1 (via cytoplasmic region). Isoform 3 interacts (via N-terminus) with ITGB4 isoform beta-4a (via cytoplasmic region). Isoform 3 interacts (via N-terminus) with ERBIN (via C-terminus). Isoform 3 associates (via C-terminal) with KRT5-KRT14 (via rod region) intermediate filaments of keratins. Interacts with MAPRE1; probably required for targeting to the growing microtubule plus ends. Interacts with TMIGD2. Isoform 9 interacts with TMEM108. In terms of tissue distribution, isoform 1 is expressed in myoblasts (at protein level). Isoform 3 is expressed in the skin. Isoform 6 is expressed in the brain. Highly expressed in skeletal muscle and cultured keratinocytes.

It localises to the cytoplasm. The protein resides in the cytoskeleton. It is found in the stress fiber. Its subcellular location is the cell projection. The protein localises to the axon. It localises to the myofibril. The protein resides in the sarcomere. It is found in the z line. Its subcellular location is the h zone. The protein localises to the cell junction. It localises to the hemidesmosome. The protein resides in the nucleus. It is found in the nucleus envelope. Its subcellular location is the membrane. The protein localises to the endoplasmic reticulum membrane. It localises to the cell cortex. The protein resides in the cell membrane. In terms of biological role, cytoskeletal linker protein. Acts as an integrator of intermediate filaments, actin and microtubule cytoskeleton networks. Required for anchoring either intermediate filaments to the actin cytoskeleton in neural and muscle cells or keratin-containing intermediate filaments to hemidesmosomes in epithelial cells. The proteins may self-aggregate to form filaments or a two-dimensional mesh. Regulates the organization and stability of the microtubule network of sensory neurons to allow axonal transport. Mediates docking of the dynein/dynactin motor complex to vesicle cargos for retrograde axonal transport through its interaction with TMEM108 and DCTN1. Plays a structural role in the assembly of hemidesmosomes of epithelial cells; anchors keratin-containing intermediate filaments to the inner plaque of hemidesmosomes. Required for the regulation of keratinocyte polarity and motility; mediates integrin ITGB4 regulation of RAC1 activity. Functionally, required for bundling actin filaments around the nucleus. Its function is as follows. Regulates the organization and stability of the microtubule network of sensory neurons to allow axonal transport. This Homo sapiens (Human) protein is Dystonin.